A 289-amino-acid polypeptide reads, in one-letter code: LBH domain-containing protein 1 (289 aa).

Disordered regions lie at residues 1–36 (MALV…PLWD) and 205–289 (EGAE…ASQD). An LBH domain is found at 1–128 (MALVPGRSKE…AEAFFQDQSE (128 aa)). The span at 15-25 (TRNSPGSSQHP) shows a compositional bias: polar residues.

Expressed in bladder cancer tissues (at protein level).

The sequence is that of LBH domain-containing protein 1 from Homo sapiens (Human).